The following is a 154-amino-acid chain: Secreted RxLR effector protein PITG_21681 (154 aa).

The first 20 residues, 1–20 (MRRYAALMVIDAVLLSTSQA), serve as a signal peptide directing secretion. Residues 42-70 (SAERDGGIPNKRSLRRISVTESNDGERDE) form a disordered region. A RxLR-dEER motif is present at residues 53 to 72 (RSLRRISVTESNDGERDEER).

Belongs to the RxLR effector family.

It localises to the secreted. The protein localises to the host cell. Secreted effector that is involved in host plant infection. Increases the susceptibility to P.infestans and reduces the plant growth. Affects the expression of host genes. This Phytophthora infestans (strain T30-4) (Potato late blight agent) protein is Secreted RxLR effector protein PITG_21681.